A 203-amino-acid polypeptide reads, in one-letter code: Small ribosomal subunit protein uS7 (203 aa).

The segment at 1-22 (MSESEAPEPDQPAGAEEATGAK) is disordered.

It belongs to the universal ribosomal protein uS7 family. As to quaternary structure, part of the 30S ribosomal subunit.

Its function is as follows. One of the primary rRNA binding proteins, it binds directly to 16S rRNA where it nucleates assembly of the head domain of the 30S subunit. Is located at the subunit interface close to the decoding center. The chain is Small ribosomal subunit protein uS7 from Halococcus morrhuae (Micrococcus morrhuae).